Reading from the N-terminus, the 147-residue chain is Deoxyuridine 5'-triphosphate nucleotidohydrolase (147 aa).

Residues 67–69 (RSG), Asn-80, and 84–86 (TID) each bind substrate.

This sequence belongs to the dUTPase family. It depends on Mg(2+) as a cofactor.

The catalysed reaction is dUTP + H2O = dUMP + diphosphate + H(+). It functions in the pathway pyrimidine metabolism; dUMP biosynthesis; dUMP from dCTP (dUTP route): step 2/2. Its function is as follows. This enzyme is involved in nucleotide metabolism: it produces dUMP, the immediate precursor of thymidine nucleotides and it decreases the intracellular concentration of dUTP so that uracil cannot be incorporated into DNA. This Anaeromyxobacter dehalogenans (strain 2CP-1 / ATCC BAA-258) protein is Deoxyuridine 5'-triphosphate nucleotidohydrolase.